The following is a 1177-amino-acid chain: DNA-directed RNA polymerase subunit beta (1177 aa).

Residues 1147–1161 (DDTEIEMRDTEDDDD) show a composition bias toward acidic residues. Residues 1147–1177 (DDTEIEMRDTEDDDDHQSADKLNVEVETTKE) are disordered. Over residues 1162–1177 (HQSADKLNVEVETTKE) the composition is skewed to basic and acidic residues.

Belongs to the RNA polymerase beta chain family. In terms of assembly, the RNAP catalytic core consists of 2 alpha, 1 beta, 1 beta' and 1 omega subunit. When a sigma factor is associated with the core the holoenzyme is formed, which can initiate transcription.

The enzyme catalyses RNA(n) + a ribonucleoside 5'-triphosphate = RNA(n+1) + diphosphate. In terms of biological role, DNA-dependent RNA polymerase catalyzes the transcription of DNA into RNA using the four ribonucleoside triphosphates as substrates. In Bacillus anthracis (strain A0248), this protein is DNA-directed RNA polymerase subunit beta.